The primary structure comprises 208 residues: Putative 3-methyladenine DNA glycosylase (208 aa).

Residues 1-20 (MGRAHTVSRGEDHPPIARSE) form a disordered region.

Belongs to the DNA glycosylase MPG family.

The protein is Putative 3-methyladenine DNA glycosylase of Mesorhizobium japonicum (strain LMG 29417 / CECT 9101 / MAFF 303099) (Mesorhizobium loti (strain MAFF 303099)).